Consider the following 458-residue polypeptide: MLKIFNTLTREKEEFKPINPNKVGMYVCGVTVYDLCHFGHGRTFVSFDVITRYLRYLGYDLRYVRNITDVDDKIIKRALENNETCDQLVERMIAEMHKDFDALNILRPDVEPRATKHIPEIIAMVETLIRRGHAYVAEDGDVMFDVESFQKYGALSRQNLEQLQAGARVEIKSVKKNPMDFVLWKMSKPNEPSWDSPWGKGRPGWHIECSAMNDKELGNHFDIHGGGSDLMFPHHENEIAQSCCAHDGEYVNYWLHTGMLTINEEKMSKSLNNFFTIRDILTKYDAESVRYFFLTAQYRSLLDYSEENIGLARKALERLYTALRGCETVEIPAEDQYVIDFKTAMDDDFNTPGALAVLFELAREINKLKTEDQTKANQLASRLKQLAGVLGLLEQAPETFLQGDAADAEVSKIEALIKRRNEARAAKDWAAADAARNELTAMGVVLEDGAKGTTWRKL.

A Zn(2+)-binding site is contributed by Cys-28. Residues Val-30–His-40 carry the 'HIGH' region motif. Positions 209, 234, and 238 each coordinate Zn(2+). The short motif at Lys-266–Ser-270 is the 'KMSKS' region element. Lys-269 lines the ATP pocket.

The protein belongs to the class-I aminoacyl-tRNA synthetase family. As to quaternary structure, monomer. Requires Zn(2+) as cofactor.

The protein localises to the cytoplasm. It carries out the reaction tRNA(Cys) + L-cysteine + ATP = L-cysteinyl-tRNA(Cys) + AMP + diphosphate. This chain is Cysteine--tRNA ligase, found in Mannheimia succiniciproducens (strain KCTC 0769BP / MBEL55E).